Reading from the N-terminus, the 605-residue chain is Probable potassium transport system protein Kup 2 (605 aa).

The next 12 helical transmembrane spans lie at 17–37 (GLVF…IMTL), 45–65 (VLGI…VEYA), 96–116 (MAFA…DGVI), 139–159 (AQGG…IFQF), 169–189 (FGPI…VSII), 211–231 (GLAG…GEAL), 246–266 (AWYF…AFIL), 286–306 (LYIP…QALI), 338–358 (IYIG…MILF), 367–387 (AYGL…TMIF), 394–414 (WKVP…TANL), and 417–437 (LPHG…IMVI).

The protein belongs to the HAK/KUP transporter (TC 2.A.72) family.

It localises to the cell inner membrane. It carries out the reaction K(+)(in) + H(+)(in) = K(+)(out) + H(+)(out). Transport of potassium into the cell. Likely operates as a K(+):H(+) symporter. This is Probable potassium transport system protein Kup 2 from Geobacter sulfurreducens (strain ATCC 51573 / DSM 12127 / PCA).